The following is a 403-amino-acid chain: MAEQKKVVLAYSGGLDTSVAIKWLQEQGYDVVACCLDVGEGKDLAFVQQKALEVGAVNSYVIDAKEEFAREYALISMQAHTMYEGKYPLVSALSRPLIAKKLVEVAEKENAVAVAHGCTGKGNDQVRFEVSIKSLNPDLEVIAPVREWQWSREEEIEYAASRGIPIPINLDSPYSIDQNLWGRANECGILEDPWAAPPEGAYDLTASLENTPDVPEIIEIAFEAGVPVSIDGVTYPLADLILKLNETAGKHGIGRIDHVENRLVGIKSREVYECPGAMTLITAHKELEDLTLVKEVAHFKPAIEQKLSEIIYNGLWFSPLKDALLAFLKETQKHVTGVVRVKLFKGHAIVEGRKSEYSLYDEKLATYTKDDAFDHHAAIGFIELWGLPTKVNSIVKKKEQIEA.

10-18 (AYSGGLDTS) provides a ligand contact to ATP. Y87 contacts L-citrulline. G117 is an ATP binding site. 3 residues coordinate L-aspartate: T119, N123, and D124. N123 contributes to the L-citrulline binding site. Residues R127, S175, E260, and Y272 each coordinate L-citrulline.

Belongs to the argininosuccinate synthase family. Type 1 subfamily. In terms of assembly, homotetramer.

The protein localises to the cytoplasm. The enzyme catalyses L-citrulline + L-aspartate + ATP = 2-(N(omega)-L-arginino)succinate + AMP + diphosphate + H(+). Its pathway is amino-acid biosynthesis; L-arginine biosynthesis; L-arginine from L-ornithine and carbamoyl phosphate: step 2/3. The protein is Argininosuccinate synthase of Bacillus velezensis (strain DSM 23117 / BGSC 10A6 / LMG 26770 / FZB42) (Bacillus amyloliquefaciens subsp. plantarum).